The chain runs to 330 residues: Inactive hydroxysteroid dehydrogenase-like protein 1 (330 aa).

An N-acetylalanine modification is found at A2. The tract at residues 2–82 is required for mitochondria translocation; that stretch reads AAVDSFYLLY…SGATDGIGKA (81 aa). NADP(+) is bound by residues 74–80, D125, and K222; that span reads GATDGIG.

Belongs to the short-chain dehydrogenases/reductases (SDR) family. 17-beta-HSD 3 subfamily. As to quaternary structure, interacts with STYXL1.

Its subcellular location is the mitochondrion. In Mus musculus (Mouse), this protein is Inactive hydroxysteroid dehydrogenase-like protein 1 (Hsdl1).